A 301-amino-acid polypeptide reads, in one-letter code: Tegument protein VP22 (301 aa).

Positions 1 to 171 are disordered; the sequence is MTSRRSVKSG…PTRSKTPAQG (171 aa). Residues 113 to 124 show a composition bias toward low complexity; that stretch reads RTPTTAPRAPRT. The Nuclear localization signal signature appears at 163–166; the sequence is TRSK. An interaction with gE region spans residues 174 to 267; that stretch reads RKLHFSTAPP…LVNPDVVQDV (94 aa). Residues 232–244 carry the Nuclear export signal motif; sequence LNELLGITTIRVT. Over residues 269–281 the composition is skewed to low complexity; the sequence is AATATRGRSAASR. Residues 269-301 form a disordered region; the sequence is AATATRGRSAASRPTERPRAPARSASRPRRPVE.

It belongs to the alphaherpesvirinae VP22 tegument protein family. Interacts with gE (via C-terminus); this interaction is necessary for the recruitment of VP22 to the Golgi and its packaging into virions. Interacts with gM (via C-terminus). Interacts with VP16; this interaction allows the formation of a tripartite complex composed of VP16, VP22 and UL41/VHS. According to a report interacts with gD (via C-terminus). According another publication, does not interact with gD. Interacts with host CGAS. Interacts with host SET; this interaction may interfere with SET-mediated nucleosomal deposition onto the viral genome. Interacts with the capsid-binding protein UL16. In terms of processing, highly phosphorylated in the host cell. Packaging is selective for underphosphorylated forms.

It localises to the virion tegument. Its subcellular location is the host cytoplasm. It is found in the host nucleus. The protein localises to the host Golgi apparatus. In terms of biological role, tegument protein that plays different roles during the time course of infection. Participates in both the accumulation of viral mRNAs and viral protein translation at late time of infection. Modulates the RNase activity of the virion host shutoff protein UL41 probably to ensure necessary levels of key cellular mRNAs and proteins. Plays a role in microtubule reorganization that occurs after viral infection by stabilizing microtubule network. Finally, may prevent nucleosomal deposition onto the viral genome by interacting with and inhibiting host SET. Plays a role in the inhibition of host innate immune system by targeting the CGAS enzymatic activity which is the principal cytosolic DNA sensor that detects invading viral DNA. Acts by mediating disruption of liquid-like droplets in which CGAS is activated, thereby preventing CGAS activity. This is Tegument protein VP22 from Human herpesvirus 1 (strain 17) (HHV-1).